A 188-amino-acid chain; its full sequence is Marginal zone B- and B1-cell-specific protein (188 aa).

Positions 1 to 20 (MRLPLPLLLLFGCRAILGSA) are cleaved as a signal peptide. 3 disulfides stabilise this stretch: C49–C177, C52–C170, and C94–C142. A Prevents secretion from ER motif is present at residues 185 to 188 (REEL).

The protein belongs to the MZB1 family. Part of the ER chaperone complex, a multi-protein complex in the endoplasmic reticulum containing a large number of molecular chaperones which associates with unassembled incompletely folded immunoglobulin heavy chains. Interacts with HSP90B1 and PDIA3 in a calcium-dependent manner. In terms of processing, forms an interchain disulfide bond with IgM monomers. In terms of tissue distribution, expressed predominantly in the spleen and lymph nodes. Abundantly expressed in marginal zone B and B1 cells. High expression in mesenteric adipose tissue (MAT). Expressed also in pancreas, perigonadal adipose tissue (PAT), uterus, subcutaneous adipose tissue, heart, muscle, ovary and liver. Very low expression is detected in brown adipose tissue. In PAT, significantly higher expression in stromal-vascular cell than in adipocytes. Expressed in macrophage RAW 264.7 cell line. Down-regulated in For-knockout female MAT at 5 months (obese state) followed by steep up-regulation at 9 months (prediabetic condition) when mutants progress towards the metabolic syndrome.

The protein localises to the endoplasmic reticulum. It localises to the endoplasmic reticulum lumen. The protein resides in the secreted. Associates with immunoglobulin M (IgM) heavy and light chains and promotes IgM assembly and secretion. May exert its effect by acting as a molecular chaperone or as an oxidoreductase as it displays a low level of oxidoreductase activity. Helps to diversify peripheral B-cell functions by regulating Ca(2+) stores, antibody secretion and integrin activation. Functionally, acts as a hormone-regulated adipokine/pro-inflammatory cytokine that is implicated in causing chronic inflammation, affecting cellular expansion and blunting insulin response in adipocytes. May have a role in the onset of insulin resistance. The polypeptide is Marginal zone B- and B1-cell-specific protein (Mzb1) (Mus musculus (Mouse)).